The chain runs to 217 residues: dITP/XTP pyrophosphatase (217 aa).

7-12 contributes to the substrate binding site; that stretch reads SRNKKK. The Proton acceptor role is filled by D72. D72 is a Mg(2+) binding site. Substrate contacts are provided by residues S73, 163 to 166, K195, and 200 to 201; these read FGYD and HR.

The protein belongs to the HAM1 NTPase family. Homodimer. It depends on Mg(2+) as a cofactor.

The enzyme catalyses XTP + H2O = XMP + diphosphate + H(+). It catalyses the reaction dITP + H2O = dIMP + diphosphate + H(+). It carries out the reaction ITP + H2O = IMP + diphosphate + H(+). Functionally, pyrophosphatase that catalyzes the hydrolysis of nucleoside triphosphates to their monophosphate derivatives, with a high preference for the non-canonical purine nucleotides XTP (xanthosine triphosphate), dITP (deoxyinosine triphosphate) and ITP. Seems to function as a house-cleaning enzyme that removes non-canonical purine nucleotides from the nucleotide pool, thus preventing their incorporation into DNA/RNA and avoiding chromosomal lesions. This Corynebacterium jeikeium (strain K411) protein is dITP/XTP pyrophosphatase.